Consider the following 246-residue polypeptide: MLDQVCQLARNAGDAIMQVYDGTKPMDVVSKADNSPVTAADIAAHTVIMDGLRTLAPDIPVLSEEDPPGWEVRQHWQRYWLVDPLDGTKEFIKRNGEFTVNIALIDHGKPILGVVYAPVMNVMYSAAEGKAWKEECGVRKLIQVRDARPPLVVISRSHADAELKEYLQQLGEHQTTSIGSSLKFCLVAEGQAQLYPRFGPTNIWDTAAGHAVAAAAGAHVHDWQGKPLDYTPRESFLNPGFRVSIY.

Positions 64, 83, 85, 86, and 205 each coordinate Mg(2+). Glu-64 is a substrate binding site. Substrate is bound by residues 85–88 (LDGT) and Asp-205.

It belongs to the inositol monophosphatase superfamily. CysQ family. The cofactor is Mg(2+).

It localises to the cell inner membrane. It catalyses the reaction adenosine 3',5'-bisphosphate + H2O = AMP + phosphate. Functionally, converts adenosine-3',5'-bisphosphate (PAP) to AMP. This Shigella flexneri protein is 3'(2'),5'-bisphosphate nucleotidase CysQ.